Reading from the N-terminus, the 278-residue chain is Tryptophan synthase alpha chain (278 aa).

Residues glutamate 49 and aspartate 60 each act as proton acceptor in the active site.

The protein belongs to the TrpA family. In terms of assembly, tetramer of two alpha and two beta chains.

The catalysed reaction is (1S,2R)-1-C-(indol-3-yl)glycerol 3-phosphate + L-serine = D-glyceraldehyde 3-phosphate + L-tryptophan + H2O. It participates in amino-acid biosynthesis; L-tryptophan biosynthesis; L-tryptophan from chorismate: step 5/5. The alpha subunit is responsible for the aldol cleavage of indoleglycerol phosphate to indole and glyceraldehyde 3-phosphate. The polypeptide is Tryptophan synthase alpha chain (Granulibacter bethesdensis (strain ATCC BAA-1260 / CGDNIH1)).